We begin with the raw amino-acid sequence, 257 residues long: K88 minor fimbrial subunit FaeJ (257 aa).

An N-terminal signal peptide occupies residues 1-26 (MLNIIHRLKSGMFPALFFLTSASVLA).

It is found in the fimbrium. K88 minor fimbrial subunit, plays an essential role in the biogenesis of the K88 fimbriae. Fimbriae (also called pili), are polar filaments radiating from the surface of the bacterium to a length of 0.5-1.5 micrometers and numbering 100-300 per cell. They enable bacteria to colonize the epithelium of specific host organs. The chain is K88 minor fimbrial subunit FaeJ (faeJ) from Escherichia coli.